The chain runs to 74 residues: ATP synthase subunit c (74 aa).

A run of 2 helical transmembrane segments spans residues 9-29 (IGAG…GNIF) and 54-74 (FALT…ILFV).

This sequence belongs to the ATPase C chain family. In terms of assembly, F-type ATPases have 2 components, F(1) - the catalytic core - and F(0) - the membrane proton channel. F(1) has five subunits: alpha(3), beta(3), gamma(1), delta(1), epsilon(1). F(0) has three main subunits: a(1), b(2) and c(10-14). The alpha and beta chains form an alternating ring which encloses part of the gamma chain. F(1) is attached to F(0) by a central stalk formed by the gamma and epsilon chains, while a peripheral stalk is formed by the delta and b chains.

The protein resides in the cell inner membrane. In terms of biological role, f(1)F(0) ATP synthase produces ATP from ADP in the presence of a proton or sodium gradient. F-type ATPases consist of two structural domains, F(1) containing the extramembraneous catalytic core and F(0) containing the membrane proton channel, linked together by a central stalk and a peripheral stalk. During catalysis, ATP synthesis in the catalytic domain of F(1) is coupled via a rotary mechanism of the central stalk subunits to proton translocation. Key component of the F(0) channel; it plays a direct role in translocation across the membrane. A homomeric c-ring of between 10-14 subunits forms the central stalk rotor element with the F(1) delta and epsilon subunits. The polypeptide is ATP synthase subunit c (Gluconacetobacter diazotrophicus (strain ATCC 49037 / DSM 5601 / CCUG 37298 / CIP 103539 / LMG 7603 / PAl5)).